Here is a 454-residue protein sequence, read N- to C-terminus: Bifunctional protein GlmU (454 aa).

Residues 1–233 (MQATPRPLAL…EAETIGINSR (233 aa)) are pyrophosphorylase. Residues 13–16 (LAAG), Lys27, Gln80, 85–86 (GT), 108–110 (YGD), Gly145, Glu159, Asn174, and Asn231 contribute to the UDP-N-acetyl-alpha-D-glucosamine site. Residue Asp110 participates in Mg(2+) binding. Position 231 (Asn231) interacts with Mg(2+). Residues 234-254 (AELVRAEAQFQSQRRAALIEA) form a linker region. The segment at 255-454 (GVTMQAPDSV…KAIKDAKSKD (200 aa)) is N-acetyltransferase. Residues Arg320 and Lys338 each coordinate UDP-N-acetyl-alpha-D-glucosamine. The active-site Proton acceptor is the His350. Positions 353 and 364 each coordinate UDP-N-acetyl-alpha-D-glucosamine. Acetyl-CoA-binding positions include Ala367, 373–374 (NY), Ser392, Ser410, and Arg427.

In the N-terminal section; belongs to the N-acetylglucosamine-1-phosphate uridyltransferase family. It in the C-terminal section; belongs to the transferase hexapeptide repeat family. In terms of assembly, homotrimer. It depends on Mg(2+) as a cofactor.

The protein resides in the cytoplasm. The enzyme catalyses alpha-D-glucosamine 1-phosphate + acetyl-CoA = N-acetyl-alpha-D-glucosamine 1-phosphate + CoA + H(+). It carries out the reaction N-acetyl-alpha-D-glucosamine 1-phosphate + UTP + H(+) = UDP-N-acetyl-alpha-D-glucosamine + diphosphate. It participates in nucleotide-sugar biosynthesis; UDP-N-acetyl-alpha-D-glucosamine biosynthesis; N-acetyl-alpha-D-glucosamine 1-phosphate from alpha-D-glucosamine 6-phosphate (route II): step 2/2. The protein operates within nucleotide-sugar biosynthesis; UDP-N-acetyl-alpha-D-glucosamine biosynthesis; UDP-N-acetyl-alpha-D-glucosamine from N-acetyl-alpha-D-glucosamine 1-phosphate: step 1/1. It functions in the pathway bacterial outer membrane biogenesis; LPS lipid A biosynthesis. Its function is as follows. Catalyzes the last two sequential reactions in the de novo biosynthetic pathway for UDP-N-acetylglucosamine (UDP-GlcNAc). The C-terminal domain catalyzes the transfer of acetyl group from acetyl coenzyme A to glucosamine-1-phosphate (GlcN-1-P) to produce N-acetylglucosamine-1-phosphate (GlcNAc-1-P), which is converted into UDP-GlcNAc by the transfer of uridine 5-monophosphate (from uridine 5-triphosphate), a reaction catalyzed by the N-terminal domain. The chain is Bifunctional protein GlmU from Jannaschia sp. (strain CCS1).